The following is a 153-amino-acid chain: Glycosylation-dependent cell adhesion molecule 1 (153 aa).

An N-terminal signal peptide occupies residues 1-18 (MKFLCVLLLASLAATSLA). O-linked (GalNAc...) threonine; partial glycosylation is present at Thr-34. Phosphoserine is present on residues Ser-47, Ser-52, Ser-56, Ser-58, and Ser-64. O-linked (HexNAc...) serine glycosylation occurs at Ser-78. N-linked (GlcNAc...) asparagine glycosylation is present at Asn-95. Residues 95-115 (NATLGSEETTEHTPSDASTTE) form a disordered region. Thr-104 is a glycosylation site (O-linked (GalNAc...) threonine).

It belongs to the PP3/GlyCAM-1 family. In terms of tissue distribution, highly and specifically expressed in the lactating mammary gland.

The protein resides in the membrane. In Bos taurus (Bovine), this protein is Glycosylation-dependent cell adhesion molecule 1 (GLYCAM1).